We begin with the raw amino-acid sequence, 350 residues long: Enoyl-[acyl-carrier-protein] reductase, mitochondrial (350 aa).

The N-terminal 12 residues, Met1–Phe12, are a transit peptide targeting the mitochondrion. Tyr68 functions as the Proton donor in the catalytic mechanism. Residues Asn141, Asn167–Val170, Arg190–Arg192, Tyr259–Met262, Phe284–Val286, and Lys345 each bind NADP(+).

Belongs to the zinc-containing alcohol dehydrogenase family. Quinone oxidoreductase subfamily. As to quaternary structure, homodimer. As to expression, expressed in the developing pronephros.

It is found in the mitochondrion. The catalysed reaction is a 2,3-saturated acyl-[ACP] + NADP(+) = a (2E)-enoyl-[ACP] + NADPH + H(+). Its function is as follows. Catalyzes the NADPH-dependent reduction of trans-2-enoyl thioesters in mitochondrial fatty acid synthesis (fatty acid synthesis type II). Fatty acid chain elongation in mitochondria uses acyl carrier protein (ACP) as an acyl group carrier, but the enzyme accepts both ACP and CoA thioesters as substrates in vitro. May provide the octanoyl chain used for lipoic acid biosynthesis, regulating protein lipoylation and mitochondrial respiratory activity. Involved in iron homeostasis; affecting Fe-S cluster assembly and ceramide metabolism. Required for proper morphology and bioenergetic functions of mitochondria. Required for maintenance of neurons. Functions in pronephros development, regulating late differentiation of all pronephric tubule segments. This is Enoyl-[acyl-carrier-protein] reductase, mitochondrial (mecr) from Xenopus tropicalis (Western clawed frog).